We begin with the raw amino-acid sequence, 717 residues long: Ribosomal RNA large subunit methyltransferase K/L (717 aa).

Positions Gly-45–Gln-142 constitute a THUMP domain.

The protein belongs to the methyltransferase superfamily. RlmKL family.

It localises to the cytoplasm. The enzyme catalyses guanosine(2445) in 23S rRNA + S-adenosyl-L-methionine = N(2)-methylguanosine(2445) in 23S rRNA + S-adenosyl-L-homocysteine + H(+). The catalysed reaction is guanosine(2069) in 23S rRNA + S-adenosyl-L-methionine = N(2)-methylguanosine(2069) in 23S rRNA + S-adenosyl-L-homocysteine + H(+). In terms of biological role, specifically methylates the guanine in position 2445 (m2G2445) and the guanine in position 2069 (m7G2069) of 23S rRNA. The polypeptide is Ribosomal RNA large subunit methyltransferase K/L (Hahella chejuensis (strain KCTC 2396)).